The primary structure comprises 396 residues: S-adenosylmethionine synthase (396 aa).

Glu-11 is a Mg(2+) binding site. Residue His-17 coordinates ATP. Residue Glu-45 participates in K(+) binding. L-methionine is bound by residues Glu-58 and Gln-101. ATP-binding positions include 169 to 171 (DGK), 237 to 240 (SGRF), Asp-248, 254 to 255 (RK), Ala-271, Lys-275, and Lys-279. Asp-248 is a binding site for L-methionine. Residue Lys-279 participates in L-methionine binding.

The protein belongs to the AdoMet synthase family. In terms of assembly, homotetramer. Requires Mn(2+) as cofactor. Mg(2+) is required as a cofactor. Co(2+) serves as cofactor. The cofactor is K(+).

It is found in the cytoplasm. The enzyme catalyses L-methionine + ATP + H2O = S-adenosyl-L-methionine + phosphate + diphosphate. It functions in the pathway amino-acid biosynthesis; S-adenosyl-L-methionine biosynthesis; S-adenosyl-L-methionine from L-methionine: step 1/1. Its function is as follows. Catalyzes the formation of S-adenosylmethionine from methionine and ATP. The reaction comprises two steps that are both catalyzed by the same enzyme: formation of S-adenosylmethionine (AdoMet) and triphosphate, and subsequent hydrolysis of the triphosphate. The chain is S-adenosylmethionine synthase (SAMS) from Medicago sativa subsp. falcata (Sickle medic).